Here is a 205-residue protein sequence, read N- to C-terminus: uncharacterized protein (205 aa).

The stretch at 10–75 forms a coiled coil; it reads QDLLSAVDQQ…AANLMTVMTD (66 aa). Positions 108–141 are disordered; it reads MPLPSSNTNNDQTSPPASGKTSETPKKNPTNAMF. Positions 111–141 are enriched in polar residues; that stretch reads PSSNTNNDQTSPPASGKTSETPKKNPTNAMF.

The protein belongs to the asfivirus K205R family.

It localises to the host cytoplasm. Its function is as follows. Induces host endoplasmic reticulum stress and consequently activates autophagy and NF-kappa-B signaling pathway. In turn, may induce autophagy-mediated STING1 degradation and innate immune evasion. This is an uncharacterized protein from Ornithodoros (relapsing fever ticks).